The chain runs to 475 residues: MNVAAGGPGTASASTTAANSIFNNSLLASATGATTMPMAQLADGWLELESDPGLFTLLLEDFGCHDVQVEEVYDLQKPIESPYGFIFLFRWIEERRARRKIVETTAEIFVKDEEAISSIFFAQQVVPNSCATHALLSVLLNCNENNLQLGDTLSRLKVHTKGMSPENKGLAIGNTPELACAHNSHAIPQARRRLERTGAGVASCRFTGEAFHFVSFVPISGQLFELDGLKPYPMNHGGWEDHEDWTDKFRRVMAERLGIATGEQDIRFNLMAVVPDRRIAITHKLKMLRTNQAIVSGTLQKLLKADEQGESGNGDQQRPDTPTTLLEPSAFTAKDLQLLLKNLDTEIAINEQNLADENDRRHMFKVDASRRTHNYDKFICTFLSMLAHQGVLGELVSQHLLPSKKVSGQSAANRISKQNSAASSAGANAGAAAGVTPKSQQQQQQPQTAASKNGKSPGKTPGRRRKGRNKCRKRK.

Residues G44–P275 enclose the UCH catalytic domain. Residue C130 is the Nucleophile of the active site. H212 acts as the Proton donor in catalysis. Residues A333–R360 adopt a coiled-coil conformation. Residues N374–P402 enclose the ULD domain. A positively charged C-terminal tail required for binding nucleosomes region spans residues K404–K475. The interval A411–K475 is disordered. Low complexity predominate over residues N419 to T460. Residues P461–K475 are compositionally biased toward basic residues.

Belongs to the peptidase C12 family. BAP1 subfamily. As to quaternary structure, catalytic component of the polycomb repressive deubiquitinase (PR-DUB) complex, at least composed of caly/calypso, Asx and sba (MBD5/6 homolog). The PR-DUB complex associates with nucleosomes to mediate deubiquitination of histone H2AK118ub1 substrates; the association requires the positively charged C-terminal tail of caly, probably due to direct binding of DNA. Interacts (via ULD domain) with Asx (via DEUBAD domain); the interaction produces a stable heterodimer with a composite binding site for ubiquitin. Homodimerizes (via coiled-coil hinge-region between the UCH and ULD domains) to mediate assembly of 2 copies of the caly-Asx heterodimer into a bisymmetric tetramer; dimerization enhances PR-DUB association with nucleosomes.

It is found in the nucleus. The catalysed reaction is Thiol-dependent hydrolysis of ester, thioester, amide, peptide and isopeptide bonds formed by the C-terminal Gly of ubiquitin (a 76-residue protein attached to proteins as an intracellular targeting signal).. Its function is as follows. Catalytic component of the polycomb repressive deubiquitinase (PR-DUB) complex, a complex that specifically mediates deubiquitination of histone H2A monoubiquitinated at 'Lys-119' (H2AK118ub1). Mediates bisymmetric organization of the PR-DUB complex and is involved in association with nucleosomes to mediate deubiquitination. Does not deubiquitinate monoubiquitinated histone H2B. Required to maintain the transcriptionally repressive state of homeotic genes throughout development. The PR-DUB complex has weak or no activity toward 'Lys-48'- and 'Lys-63'-linked polyubiquitin chains. Polycomb group (PcG) protein. The chain is Ubiquitin carboxyl-terminal hydrolase calypso from Drosophila persimilis (Fruit fly).